Reading from the N-terminus, the 644-residue chain is Sodium/hydrogen exchanger 9 (644 aa).

The Lumenal portion of the chain corresponds to 1 to 20; that stretch reads MAGQLRLTSGKDEDHFQHQG. The helical transmembrane segment at 21-41 threads the bilayer; the sequence is AVELLAFNFLLILTILTIWLF. The Cytoplasmic portion of the chain corresponds to 42-45; that stretch reads KNHR. A helical transmembrane segment spans residues 46-66; it reads FRFLHETGGAMVYGLIMGLIL. The Lumenal segment spans residues 67-126; the sequence is RYATAPTDIDSGTVYNCGKLLFSPSTLLVNITDQVYEYKYQREINQHNISPHQGNAILEK. The helical transmembrane segment at 127-147 threads the bilayer; sequence MTFDPEIFFNVLLPPIIFHAG. The Cytoplasmic segment spans residues 148-164; the sequence is YSLKKRHFFQNLGSILT. Residues 165 to 185 traverse the membrane as a helical segment; it reads YAFLGTAISCVVIGLIMYGFV. Residues 186 to 203 lie on the Lumenal side of the membrane; it reads KAMVHAGQLKSGDFHFTD. The helical transmembrane segment at 204–224 threads the bilayer; it reads CLFFGSLMSATDPVTVLAIFH. Residues 225-235 are Cytoplasmic-facing; the sequence is ELHVDPDLYTL. The helical transmembrane segment at 236–256 threads the bilayer; the sequence is LFGESVLNDAVAIVLTYSISI. The Lumenal segment spans residues 257 to 277; the sequence is YSPKENPNAFDTAAFFQSVGN. The helical transmembrane segment at 278–298 threads the bilayer; the sequence is FLGIFAGSFAMGSAYAVVTAL. Residues 299–309 are Cytoplasmic-facing; the sequence is LTKFTKLREFP. Residues 310–327 traverse the membrane as a helical segment; sequence MLETGLFFLLSWSAFLSA. Topologically, residues 328 to 333 are lumenal; that stretch reads EAAGLT. A helical membrane pass occupies residues 334 to 350; sequence GIVAVLFCGVTQAHYTY. Residues 351–364 are Cytoplasmic-facing; sequence NNLSSDSKLRTKQL. Residues 365-385 form a helical membrane-spanning segment; that stretch reads FEFMNFLAENVIFCYMGLALF. T386 is a topological domain (lumenal). The chain crosses the membrane as a helical span at residues 387–407; it reads FQNHIFNALFILGAFLAIFVA. Topologically, residues 408–429 are cytoplasmic; sequence RACNIYPLSFLLNLGRKQKIPW. The helical transmembrane segment at 430-450 threads the bilayer; the sequence is NFQHMMMFSGLRGAIAFALAI. Topologically, residues 451 to 465 are lumenal; it reads RNTESQPKQMMFTTT. Residues 466–486 form a helical membrane-spanning segment; it reads LLLVFFTVWVFGGGTTPMLTW. Residues 487-644 lie on the Cytoplasmic side of the membrane; it reads LQIRVGVDLD…EQTRGQPQMD (158 aa).

The protein belongs to the monovalent cation:proton antiporter 1 (CPA1) transporter (TC 2.A.36) family. In terms of assembly, homodimer; phosphatidylinositol-4,5-bisphosphate (PIP2) and phosphatidylinositol 3,4,5-trisphosphate (PIP3) could be involved in the dimer stabilization. Interacts (via the C-terminus) with RACK1. Interacts with CHP1. As to expression, expressed in hair bundles and in vestibular hair bundles. Expressed in brain.

Its subcellular location is the late endosome membrane. It is found in the early endosome membrane. The protein resides in the recycling endosome membrane. It localises to the cell membrane. The protein localises to the cytoplasmic vesicle. Its subcellular location is the phagosome membrane. It catalyses the reaction Na(+)(in) + H(+)(out) = Na(+)(out) + H(+)(in). The catalysed reaction is K(+)(in) + H(+)(out) = K(+)(out) + H(+)(in). Functionally, endosomal Na(+), K(+)/H(+) antiporter. Mediates the electroneutral exchange of endosomal luminal H(+) for a cytosolic Na(+) or K(+). By facilitating proton efflux, SLC9A9 counteracts the acidity generated by vacuolar (V)-ATPase, thereby limiting luminal acidification. Regulates organellar pH and consequently, endosome maturation and endocytic trafficking of plasma membrane receptors and neurotransporters. Promotes the recycling of transferrin receptors back to the cell surface to facilitate additional iron uptake in the brain. Regulates synaptic transmission by regulating the luminal pH of axonal endosomes. Regulates phagosome lumenal pH, thus affecting phagosome maturation, and consequently, microbicidal activity in macrophages. Can also be active at the cell surface of specialized cells, e.g., in the inner ear hair bundles uses the high K(+) of the endolymph to regulate intracelular pH. This is Sodium/hydrogen exchanger 9 (Slc9a9) from Rattus norvegicus (Rat).